A 274-amino-acid polypeptide reads, in one-letter code: Shikimate dehydrogenase (NADP(+)) (274 aa).

Shikimate contacts are provided by residues 14 to 16 (SKS) and Thr61. Catalysis depends on Lys65, which acts as the Proton acceptor. The shikimate site is built by Asn86 and Asp102. NADP(+)-binding positions include 126-130 (GAGGA), 150-155 (NRTAEK), and Met214. Tyr216 provides a ligand contact to shikimate. Residue Gly239 participates in NADP(+) binding.

The protein belongs to the shikimate dehydrogenase family. As to quaternary structure, homodimer.

It catalyses the reaction shikimate + NADP(+) = 3-dehydroshikimate + NADPH + H(+). It functions in the pathway metabolic intermediate biosynthesis; chorismate biosynthesis; chorismate from D-erythrose 4-phosphate and phosphoenolpyruvate: step 4/7. In terms of biological role, involved in the biosynthesis of the chorismate, which leads to the biosynthesis of aromatic amino acids. Catalyzes the reversible NADPH linked reduction of 3-dehydroshikimate (DHSA) to yield shikimate (SA). This Pseudoalteromonas translucida (strain TAC 125) protein is Shikimate dehydrogenase (NADP(+)).